A 37-amino-acid polypeptide reads, in one-letter code: Large ribosomal subunit protein bL36 (37 aa).

Belongs to the bacterial ribosomal protein bL36 family.

This Bacillus pumilus (strain SAFR-032) protein is Large ribosomal subunit protein bL36.